The sequence spans 443 residues: KH domain-containing, RNA-binding, signal transduction-associated protein 1 (443 aa).

Residues 1 to 96 are disordered; sequence MQRRDDPAAR…LPPSATASVK (96 aa). Over residues 10-21 the composition is skewed to low complexity; it reads RMSRSSGRSGSM. A phosphoserine mark is found at S18, S20, and S29. At T33 the chain carries Phosphothreonine. An Asymmetric dimethylarginine; by PRMT1 modification is found at R45. R52 carries the asymmetric dimethylarginine; partial; by PRMT1 modification. S58 bears the Phosphoserine mark. T84 is subject to Phosphothreonine; by MAPK1. Residues K96 and K102 each participate in a glycyl lysine isopeptide (Lys-Gly) (interchain with G-Cter in SUMO2) cross-link. Positions 100–260 are involved in homodimerization; it reads ENKYLPELMA…VKKFLVPDMM (161 aa). S113 carries the phosphoserine modification. K139 is covalently cross-linked (Glycyl lysine isopeptide (Lys-Gly) (interchain with G-Cter in SUMO2)). Phosphoserine is present on S150. The 27-residue stretch at 171–197 folds into the KH domain; that stretch reads NFVGKILGPQGNTIKRLQEETGAKISV. Position 175 is an N6-acetyllysine; alternate (K175). Residue K175 forms a Glycyl lysine isopeptide (Lys-Gly) (interchain with G-Cter in SUMO2); alternate linkage. T183 bears the Phosphothreonine mark. Over residues 280–293 the composition is skewed to low complexity; that stretch reads PSRGRGVPVRGRGA. A disordered region spans residues 280-316; it reads PSRGRGVPVRGRGAAPPPPPVPRGRGVGPPRGALVRG. Omega-N-methylarginine occurs at positions 282, 284, and 291. R304 is subject to Asymmetric dimethylarginine; by PRMT1. Residues 307–316 are compositionally biased toward low complexity; that stretch reads GPPRGALVRG. Omega-N-methylarginine; by PRMT1 occurs at positions 310, 315, 320, and 325. Residue R320 is modified to Dimethylated arginine; in A2780 ovarian carcinoma cell line. The interval 327-346 is disordered; that stretch reads ATVTRGVPPPPTVRGAPAPR. Dimethylated arginine; in A2780 ovarian carcinoma cell line occurs at positions 331 and 340. R331 carries the post-translational modification Asymmetric dimethylarginine; alternate. Omega-N-methylarginine; by PRMT1; alternate is present on R331. The residue at position 340 (R340) is an Omega-N-methylarginine; by PRMT1. Residues 351–443 form an interaction with HNRNPA1 region; sequence GIQRIPLPPP…AYREHPYGRY (93 aa). Y387 is subject to Phosphotyrosine. S390 is modified (phosphoserine). Positions 400–420 are interaction with ZBTB7A; it reads GHGEVQDSYEAYGQDDWNGTR. The interval 411–443 is disordered; the sequence is YGQDDWNGTRPSLKAPPARPVKGAYREHPYGRY. A Glycyl lysine isopeptide (Lys-Gly) (interchain with G-Cter in SUMO2) cross-link involves residue K432. Positions 434 to 443 are enriched in basic and acidic residues; the sequence is AYREHPYGRY. Phosphotyrosine; by PTK6 occurs at positions 435, 440, and 443.

The protein belongs to the KHDRBS family. Self-associates to form homooligomers when bound to RNA, oligomerization appears to be limited when binding to proteins; dimerization increases RNA affinity. Forms a trimeric complex in the nucleus consisting of BANP, HDAC6 and KHDRBS1/SAM68; HDAC6 keeps KHDRBS1 in a deacetylated state which inhibits the inclusion of CD44 alternate exons. The complex is disrupted by MAPK1/MAPK3-mediated phosphorylation of BANP which results in BANP export to the cytoplasm. This facilitates acetylation of KHDRBS1 and CD44 variant exon inclusion. Interacts with KHDRBS3/SLIM-2. Interacts with KHDRBS2/SLIM-1; heterooligomer formation of KHDRBS family proteins may modulate RNA substrate specificity. Interacts with RASA1, LCK, FYN, PTPN6, PLCG1, GRB2, CBL, JAK3, PIK3R, STAT3, APC, HNRNPA1. Interacts with PTK6 (via SH3 and SH2 domains). Forms a complex with ILF2, ILF3, YLPM1, RBMX, NCOA5 and PPP1CA. Does not interact with TPR. Interacts with PRMT1. Binds WBP4/FBP21 (via WW domains), FNBP4/FBP30 (via WW domains). Interacts (via Arg/Gly-rich-flanked Pro-rich regions) with FYN (via the SH3 domain). Interacts with the non-receptor tyrosine kinase SRMS; the interaction leads to phosphorylation of KHDRBS1. Interacts with ZBTB7A; negatively regulates KHDRBS1 splicing activity toward BCL2L1. In terms of processing, tyrosine phosphorylated by several non-receptor tyrosine kinases including LCK, FYN and JAK3. Also tyrosine phosphorylated by the non-receptor tyrosine kinase SRMS in an EGF-dependent manner. Negatively correlates with ability to bind RNA but required for many interactions with proteins. Phosphorylation by PTK6 negatively regulates its RNA binding ability. Phosphorylation by PTK6 at Tyr-440 dictates the nuclear localization of KHDRBS1. Phosphorylation at Tyr-387 disrupts interaction with APC. Phosphorylation at tyrosine residues by FYN inverts activity on modulation of BCL2L1 alternative splicing. Acetylated. Positively correlates with ability to bind RNA. Deacetylated by HDAC6; this regulates alternative splicing by inhibiting the inclusion of CD44 alternate exons. Post-translationally, arginine methylation is required for nuclear localization. Also can affect interaction with other proteins. Inhibits interaction with Src-like SH3 domains, but not interaction with WW domains of WBP4/FBP21 and FNBP4/FBP30. As to expression, ubiquitously expressed in all tissue examined. Isoform 1 is expressed at lower levels in brain, skeletal muscle, and liver whereas isoform 3 is intensified in skeletal muscle and in liver.

The protein localises to the nucleus. It is found in the cytoplasm. It localises to the membrane. Functionally, recruited and tyrosine phosphorylated by several receptor systems, for example the T-cell, leptin and insulin receptors. Once phosphorylated, functions as an adapter protein in signal transduction cascades by binding to SH2 and SH3 domain-containing proteins. Role in G2-M progression in the cell cycle. Represses CBP-dependent transcriptional activation apparently by competing with other nuclear factors for binding to CBP. Also acts as a putative regulator of mRNA stability and/or translation rates and mediates mRNA nuclear export. Positively regulates the association of constitutive transport element (CTE)-containing mRNA with large polyribosomes and translation initiation. According to some authors, is not involved in the nucleocytoplasmic export of unspliced (CTE)-containing RNA species according to. RNA-binding protein that plays a role in the regulation of alternative splicing and influences mRNA splice site selection and exon inclusion. Binds to RNA containing 5'-[AU]UAA-3' as a bipartite motif spaced by more than 15 nucleotides. Binds poly(A). Can regulate CD44 alternative splicing in a Ras pathway-dependent manner. In cooperation with HNRNPA1 modulates alternative splicing of BCL2L1 by promoting splicing toward isoform Bcl-X(S), and of SMN1. Can regulate alternative splicing of NRXN1 and NRXN3 in the laminin G-like domain 6 containing the evolutionary conserved neurexin alternative spliced segment 4 (AS4) involved in neurexin selective targeting to postsynaptic partners. In a neuronal activity-dependent manner cooperates synergistically with KHDRBS2/SLIM-1 in regulation of NRXN1 exon skipping at AS4. The cooperation with KHDRBS2/SLIM-1 is antagonistic for regulation of NXRN3 alternative splicing at AS4. In terms of biological role, isoform 3, which is expressed in growth-arrested cells only, inhibits S phase. This is KH domain-containing, RNA-binding, signal transduction-associated protein 1 from Homo sapiens (Human).